A 129-amino-acid chain; its full sequence is Small ribosomal subunit protein uS11 (129 aa).

This sequence belongs to the universal ribosomal protein uS11 family. Part of the 30S ribosomal subunit. Interacts with proteins S7 and S18. Binds to IF-3.

In terms of biological role, located on the platform of the 30S subunit, it bridges several disparate RNA helices of the 16S rRNA. Forms part of the Shine-Dalgarno cleft in the 70S ribosome. This is Small ribosomal subunit protein uS11 from Nitrosomonas europaea (strain ATCC 19718 / CIP 103999 / KCTC 2705 / NBRC 14298).